The chain runs to 365 residues: H-2 class I histocompatibility antigen, D-D alpha chain (365 aa).

Positions 1-24 (MGAMAPRTLLLLLAAALGPTQTRA) are cleaved as a signal peptide. An alpha-1 region spans residues 25–114 (GSHSLRYFVT…ALRYYNQSAG (90 aa)). Topologically, residues 25-311 (GSHSLRYFVT…EPPSSTKTNT (287 aa)) are extracellular. N110 carries N-linked (GlcNAc...) asparagine glycosylation. Residues 115 to 206 (GSHTLQWMAG…KNGNATLLRT (92 aa)) are alpha-2. C125 and C188 are disulfide-bonded. N200 carries an N-linked (GlcNAc...) asparagine glycan. An alpha-3 region spans residues 207–298 (DPPKAHVTHH…GLPEPLTLRW (92 aa)). Residues 209 to 297 (PKAHVTHHRR…EGLPEPLTLR (89 aa)) form the Ig-like C1-type domain. A disulfide bond links C227 and C283. The interval 299 to 311 (GKEEPPSSTKTNT) is connecting peptide. Residues 312–334 (VIIAVPVVLGAVVILGAVMAFVM) traverse the membrane as a helical segment. At 335–365 (KRRRNTGGKGGDYALAPGSQSSDMSLPDCKV) the chain is on the cytoplasmic side. The tract at residues 343 to 365 (KGGDYALAPGSQSSDMSLPDCKV) is disordered. Phosphoserine occurs at positions 356 and 359.

Belongs to the MHC class I family. Heterodimer of an alpha chain and a beta chain (beta-2-microglobulin).

It is found in the membrane. Functionally, involved in the presentation of foreign antigens to the immune system. This Mus musculus (Mouse) protein is H-2 class I histocompatibility antigen, D-D alpha chain (H2-D1).